The sequence spans 122 residues: Flagellar protein FliT (122 aa).

The tract at residues Met1–Phe50 is required for homodimerization. The tract at residues Leu60–Arg98 is fliD binding.

Belongs to the FliT family. Homodimer. Interacts with FliD and FlhC.

The protein localises to the cytoplasm. Its subcellular location is the cytosol. In terms of biological role, dual-function protein that regulates the transcription of class 2 flagellar operons and that also acts as an export chaperone for the filament-capping protein FliD. As a transcriptional regulator, acts as an anti-FlhDC factor; it directly binds FlhC, thus inhibiting the binding of the FlhC/FlhD complex to class 2 promoters, resulting in decreased expression of class 2 flagellar operons. As a chaperone, effects FliD transition to the membrane by preventing its premature polymerization, and by directing it to the export apparatus. The chain is Flagellar protein FliT from Serratia proteamaculans (strain 568).